A 672-amino-acid chain; its full sequence is Acetyl-coenzyme A synthetase (672 aa).

CoA is bound by residues 217 to 220 (RRGK) and T335. Residues 411 to 413 (GEP), 435 to 440 (DTWWQT), D529, R544, and R555 each bind ATP. Mg(2+) contacts are provided by V566, H568, and I571. R613 serves as a coordination point for CoA. Residue K638 is modified to N6-acetyllysine.

This sequence belongs to the ATP-dependent AMP-binding enzyme family. Mg(2+) is required as a cofactor. Post-translationally, acetylated. Deacetylation by the SIR2-homolog deacetylase activates the enzyme. The N-terminus is blocked.

The catalysed reaction is acetate + ATP + CoA = acetyl-CoA + AMP + diphosphate. Catalyzes the conversion of acetate into acetyl-CoA (AcCoA), an essential intermediate at the junction of anabolic and catabolic pathways. AcsA undergoes a two-step reaction. In the first half reaction, AcsA combines acetate with ATP to form acetyl-adenylate (AcAMP) intermediate. In the second half reaction, it can then transfer the acetyl group from AcAMP to the sulfhydryl group of CoA, forming the product AcCoA. This is Acetyl-coenzyme A synthetase from Methanothrix soehngenii (Methanosaeta concilii).